A 98-amino-acid chain; its full sequence is Small ribosomal subunit protein eS24 (98 aa).

It belongs to the eukaryotic ribosomal protein eS24 family.

In Thermococcus sibiricus (strain DSM 12597 / MM 739), this protein is Small ribosomal subunit protein eS24.